Here is a 341-residue protein sequence, read N- to C-terminus: S-adenosylmethionine:tRNA ribosyltransferase-isomerase (341 aa).

This sequence belongs to the QueA family. Monomer.

Its subcellular location is the cytoplasm. The enzyme catalyses 7-aminomethyl-7-carbaguanosine(34) in tRNA + S-adenosyl-L-methionine = epoxyqueuosine(34) in tRNA + adenine + L-methionine + 2 H(+). It functions in the pathway tRNA modification; tRNA-queuosine biosynthesis. Transfers and isomerizes the ribose moiety from AdoMet to the 7-aminomethyl group of 7-deazaguanine (preQ1-tRNA) to give epoxyqueuosine (oQ-tRNA). In Desulforamulus reducens (strain ATCC BAA-1160 / DSM 100696 / MI-1) (Desulfotomaculum reducens), this protein is S-adenosylmethionine:tRNA ribosyltransferase-isomerase.